We begin with the raw amino-acid sequence, 221 residues long: GTP-binding nuclear protein Ran-B1 (221 aa).

In terms of domain architecture, Small GTPase Ran-type spans 10–174 (DYPSFKLVIV…LYLARKLAGD (165 aa)). Position 21–28 (21–28 (DGGTGKTT)) interacts with GTP. Residues 40 to 48 (KKYEPTIGV) are switch-I. GTP contacts are provided by residues glycine 71, 125 to 128 (NKVD), and 153 to 155 (SAK). Residues 71-87 (GQEKFGGLRDGYYIHGQ) form a switch-II region.

Belongs to the small GTPase superfamily. Ran family. In terms of assembly, found in a nuclear export complex with RanGTP, exportin and pre-miRNA.

It is found in the nucleus. In terms of biological role, GTP-binding protein involved in nucleocytoplasmic transport. Required for the import of protein into the nucleus and also for RNA export. Involved in chromatin condensation and control of cell cycle. In Nicotiana tabacum (Common tobacco), this protein is GTP-binding nuclear protein Ran-B1 (RAN-B1).